A 163-amino-acid chain; its full sequence is Nucleotide-binding protein PMI0103 (163 aa).

It belongs to the YajQ family.

Its function is as follows. Nucleotide-binding protein. This Proteus mirabilis (strain HI4320) protein is Nucleotide-binding protein PMI0103.